The following is a 235-amino-acid chain: Large ribosomal subunit protein uL1 (235 aa).

It belongs to the universal ribosomal protein uL1 family. In terms of assembly, part of the 50S ribosomal subunit.

In terms of biological role, binds directly to 23S rRNA. The L1 stalk is quite mobile in the ribosome, and is involved in E site tRNA release. Functionally, protein L1 is also a translational repressor protein, it controls the translation of the L11 operon by binding to its mRNA. The chain is Large ribosomal subunit protein uL1 from Fusobacterium nucleatum subsp. nucleatum (strain ATCC 25586 / DSM 15643 / BCRC 10681 / CIP 101130 / JCM 8532 / KCTC 2640 / LMG 13131 / VPI 4355).